Here is a 450-residue protein sequence, read N- to C-terminus: Akuammiline synthase 2 (450 aa).

His-154 functions as the Proton acceptor in the catalytic mechanism. The Nuclear localization signal motif lies at 218–225; that stretch reads MRRFVFDA. The Proton acceptor role is filled by Asp-376.

It belongs to the plant acyltransferase family. In terms of assembly, monomer.

The protein resides in the cytoplasm. Its subcellular location is the nucleus. The enzyme catalyses rhazimol + acetyl-CoA = akuammiline + CoA + H(+). It functions in the pathway alkaloid biosynthesis. In terms of biological role, acyltransferase involved in the biosynthesis of akuammilan monoterpene indole alkaloids (MIAs) natural products, components with various biological properties such as antidiabetic, antibacterial, anti-inflammatory, anticancer, and antimalarial activities. Catalyzes the conversion of rhazimol to akuammiline. The chain is Akuammiline synthase 2 from Alstonia scholaris (Dogbane).